A 73-amino-acid chain; its full sequence is Translation initiation factor IF-1 (73 aa).

An S1-like domain is found at 1-72 (MPKKDAIEVE…TRGRVTYRFK (72 aa)).

Belongs to the IF-1 family. Component of the 30S ribosomal translation pre-initiation complex which assembles on the 30S ribosome in the order IF-2 and IF-3, IF-1 and N-formylmethionyl-tRNA(fMet); mRNA recruitment can occur at any time during PIC assembly.

Its subcellular location is the cytoplasm. Functionally, one of the essential components for the initiation of protein synthesis. Stabilizes the binding of IF-2 and IF-3 on the 30S subunit to which N-formylmethionyl-tRNA(fMet) subsequently binds. Helps modulate mRNA selection, yielding the 30S pre-initiation complex (PIC). Upon addition of the 50S ribosomal subunit IF-1, IF-2 and IF-3 are released leaving the mature 70S translation initiation complex. This chain is Translation initiation factor IF-1, found in Dehalococcoides mccartyi (strain ATCC BAA-2266 / KCTC 15142 / 195) (Dehalococcoides ethenogenes (strain 195)).